We begin with the raw amino-acid sequence, 368 residues long: Homoserine O-acetyltransferase (368 aa).

Positions 43-354 (NVVVVCHALT…DYGHDAFLVE (312 aa)) constitute an AB hydrolase-1 domain. Catalysis depends on serine 148, which acts as the Nucleophile. Position 220 (arginine 220) interacts with substrate. Active-site residues include aspartate 314 and histidine 348. Aspartate 349 contributes to the substrate binding site.

The protein belongs to the AB hydrolase superfamily. MetX family. As to quaternary structure, homodimer.

It localises to the cytoplasm. The enzyme catalyses L-homoserine + acetyl-CoA = O-acetyl-L-homoserine + CoA. Its pathway is amino-acid biosynthesis; L-methionine biosynthesis via de novo pathway; O-acetyl-L-homoserine from L-homoserine: step 1/1. In terms of biological role, transfers an acetyl group from acetyl-CoA to L-homoserine, forming acetyl-L-homoserine. This Sulfurimonas autotrophica (strain ATCC BAA-671 / DSM 16294 / JCM 11897 / OK10) protein is Homoserine O-acetyltransferase.